Consider the following 473-residue polypeptide: BPI fold-containing family B member 3 (473 aa).

Positions 1 to 20 are cleaved as a signal peptide; it reads MMLGVYTLLLLWGLATPCLG. Asn-139 carries N-linked (GlcNAc...) asparagine glycosylation. A disulfide bridge connects residues Cys-161 and Cys-196.

This sequence belongs to the BPI/LBP/Plunc superfamily. BPI/LBP family.

It is found in the secreted. May have the capacity to recognize and bind specific classes of odorants. May act as a carrier molecule, transporting odorants across the mucus layer to access receptor sites. May serve as a primary defense mechanism by recognizing and removing potentially harmful odorants or pathogenic microorganisms from the mucosa or clearing excess odorant from mucus to enable new odorant stimuli to be received. This chain is BPI fold-containing family B member 3, found in Mus musculus (Mouse).